A 189-amino-acid polypeptide reads, in one-letter code: MSDKIFHNLSGKTLVATPHVITKGIYHKSLIYMLSHTEEGAIGLIFNRLVNHIDLKSFFKIKNDEITNPVMVPIYLGGPVEHEKGFFLHSSDYNKNLLLDFHNDLAVSSNLEISEDIAFGKGPKNSLFIVGYTAWKSGQLEEELEKNLWLVMDCNKEFIFADNPESKWHNALKHLGIDEIHFSSQIGNA.

This sequence belongs to the UPF0301 (AlgH) family.

This chain is UPF0301 protein A1E_00140, found in Rickettsia canadensis (strain McKiel).